A 240-amino-acid chain; its full sequence is Rho GDP-dissociation inhibitor 1 (240 aa).

The segment at 1-66 (MSLVSGARDM…DDDSKLQLGP (66 aa)) is disordered.

It belongs to the Rho GDI family. In terms of assembly, interacts with RAC-like GTP binding proteins ARAC5/ROP4 and ARAC3/ROP6.

Its subcellular location is the cytoplasm. Regulates the GDP/GTP exchange reaction of the Rho proteins by inhibiting the dissociation of GDP from them, and the subsequent binding of GTP to them. The chain is Rho GDP-dissociation inhibitor 1 (GDI1) from Arabidopsis thaliana (Mouse-ear cress).